A 422-amino-acid chain; its full sequence is MNIEKVIAREVLDSRGNPTVEAEVHLDSGFVGRAIVPSGASTGTHEALELRDGGSRYMGKGVQQAVRNVEEALGPAIVGLDASEQIAIDAALMAVDGTPNKGKMGGNAILAVSLATSRAAAEELGVPLYRYLGGSNAKTLPVPMMNLINGGAHADNSVDFQEFMVMPIGAPTFREALRYGTETFHSLKKVLSSRGYNTNVGDEGGFAPDLKSNEEALQVLLEAIEKAGYEPGKDIAIALDPAVTELYKDGHYDLESEGRTLSTAEMVDFWADWADRYPIVSIEDGLAEDDWDGWQALTTKIGDRVQLVGDDLFVTNPERLQRGIDTGVGNAILVKVNQIGSLTESMDAIELAKRHHYGTIISHRSGESEDSFIADLAVATNAGQIKTGSASRSDRIAKYNQLLRIEHALGDRAVYLGRKALR.

(2R)-2-phosphoglycerate is bound at residue Q161. Catalysis depends on E203, which acts as the Proton donor. Mg(2+) contacts are provided by D240, E283, and D310. 4 residues coordinate (2R)-2-phosphoglycerate: K335, R364, S365, and K386. K335 acts as the Proton acceptor in catalysis.

The protein belongs to the enolase family. It depends on Mg(2+) as a cofactor.

Its subcellular location is the cytoplasm. It is found in the secreted. It localises to the cell surface. The enzyme catalyses (2R)-2-phosphoglycerate = phosphoenolpyruvate + H2O. The protein operates within carbohydrate degradation; glycolysis; pyruvate from D-glyceraldehyde 3-phosphate: step 4/5. Functionally, catalyzes the reversible conversion of 2-phosphoglycerate (2-PG) into phosphoenolpyruvate (PEP). It is essential for the degradation of carbohydrates via glycolysis. This Deinococcus deserti (strain DSM 17065 / CIP 109153 / LMG 22923 / VCD115) protein is Enolase.